The primary structure comprises 442 residues: Elongation factor 1-gamma (442 aa).

The GST N-terminal domain occupies 2–87; it reads AAGTLYTYPE…FLSNDALRGS (86 aa). Positions 88-216 constitute a GST C-terminal domain; the sequence is TPQASAQVLQ…VKLCEKMAQF (129 aa). 2 stretches are compositionally biased toward basic and acidic residues: residues 224–242 and 249–263; these read MQPKKEAPAKKEKAGKEGG and QEKKEKKKEEKKAAP. Residues 224-273 are disordered; it reads MQPKKEAPAKKEKAGKEGGKQQQPQQEKKEKKKEEKKAAPAEEEMDECEA. Residues 281-442 form the EF-1-gamma C-terminal domain; the sequence is AKDPYAHLPK…KSFNQGKIFK (162 aa).

EF-1 is composed of four subunits: alpha, beta, delta, and gamma.

In terms of biological role, probably plays a role in anchoring the complex to other cellular components. In Carassius auratus (Goldfish), this protein is Elongation factor 1-gamma (eef1g).